The following is a 164-amino-acid chain: Cold-inducible RNA-binding protein (164 aa).

Positions 6-84 constitute an RRM domain; the sequence is GKLFVGGLSF…RQIRVDQAGK (79 aa). The tract at residues 65–164 is disordered; it reads AGMNGKTVDG…SYRDSYDSYG (100 aa). Positions 93-118 are enriched in gly residues; the sequence is YRGGSSGGGRGFFRGGRGRGGGGYGG. Residues 155–164 are compositionally biased toward basic and acidic residues; it reads SYRDSYDSYG.

Interacts with prmt1. Interacts with elavl1/elrA (via RRM3). Associates with ribosomes. Post-translationally, methylated on arginine residues within RGG motifs. Methylation by prmt1 promotes cytoplasmic accumulation.

The protein localises to the nucleus. The protein resides in the nucleoplasm. Its subcellular location is the cytoplasm. Cold-inducible mRNA binding protein. Acts cooperatively with elavl1/elrA to stabilize AU-rich element (ARE)-containing mRNAs by binding to them and inhibiting their deadenylation. Essential for embryonic gastrulation and neural development, acting to maintain the expression of a set of adhesion molecules, and cell movement during embryogenesis. Required for pronephros development. May play a role in hibernation. In Aquarana catesbeiana (American bullfrog), this protein is Cold-inducible RNA-binding protein.